Here is a 152-residue protein sequence, read N- to C-terminus: UPF0756 membrane protein EF_1246 (152 aa).

The next 4 membrane-spanning stretches (helical) occupy residues 4 to 24 (WLFLLLIALIAFVAKNQSLLI), 52 to 72 (LGVTIISITILVPIATGQIGL), 85 to 105 (WLGILCGILVAVLSSKGVGLI), and 115 to 135 (LVFGTILGVVFLKGIAAGPII).

The protein belongs to the UPF0756 family.

Its subcellular location is the cell membrane. This chain is UPF0756 membrane protein EF_1246, found in Enterococcus faecalis (strain ATCC 700802 / V583).